The following is a 187-amino-acid chain: Putative glutathione-dependent formaldehyde-activating enzyme (187 aa).

Residues 20–166 (FQGGVLKCKC…FESLGLESYD (147 aa)) form the CENP-V/GFA domain. Residues C27, C29, C48, C50, C53, C95, and C98 each coordinate Zn(2+).

This sequence belongs to the Gfa family. It depends on Zn(2+) as a cofactor.

It catalyses the reaction S-(hydroxymethyl)glutathione = glutathione + formaldehyde. The protein operates within one-carbon metabolism; formaldehyde degradation; formate from formaldehyde (glutathione route): step 1/3. In terms of biological role, catalyzes the condensation of formaldehyde and glutathione to S-hydroxymethylglutathione. The protein is Putative glutathione-dependent formaldehyde-activating enzyme of Verticillium alfalfae (strain VaMs.102 / ATCC MYA-4576 / FGSC 10136) (Verticillium wilt of alfalfa).